Here is a 356-residue protein sequence, read N- to C-terminus: 1-deoxy-D-xylulose 5-phosphate reductoisomerase (356 aa).

Residues Thr7, Gly8, Ser9, Ile10, Gly31, Asn33, and Asn111 each contribute to the NADPH site. Lys112 contributes to the 1-deoxy-D-xylulose 5-phosphate binding site. Glu113 serves as a coordination point for NADPH. Residue Asp131 coordinates Mn(2+). 4 residues coordinate 1-deoxy-D-xylulose 5-phosphate: Ser132, Glu133, Ser155, and His178. Residue Glu133 participates in Mn(2+) binding. Gly184 lines the NADPH pocket. 1-deoxy-D-xylulose 5-phosphate is bound by residues Ser191, Asn196, Lys197, and Glu200. Glu200 is a binding site for Mn(2+).

This sequence belongs to the DXR family. Requires Mg(2+) as cofactor. Mn(2+) is required as a cofactor.

It catalyses the reaction 2-C-methyl-D-erythritol 4-phosphate + NADP(+) = 1-deoxy-D-xylulose 5-phosphate + NADPH + H(+). The protein operates within isoprenoid biosynthesis; isopentenyl diphosphate biosynthesis via DXP pathway; isopentenyl diphosphate from 1-deoxy-D-xylulose 5-phosphate: step 1/6. Functionally, catalyzes the NADPH-dependent rearrangement and reduction of 1-deoxy-D-xylulose-5-phosphate (DXP) to 2-C-methyl-D-erythritol 4-phosphate (MEP). This Campylobacter jejuni subsp. jejuni serotype O:6 (strain 81116 / NCTC 11828) protein is 1-deoxy-D-xylulose 5-phosphate reductoisomerase.